A 225-amino-acid polypeptide reads, in one-letter code: Ribosome maturation factor RimM (225 aa).

The 82-residue stretch at 144–225 (ADEFYWVDLI…RIVVDWEADY (82 aa)) folds into the PRC barrel domain.

Belongs to the RimM family. As to quaternary structure, binds ribosomal protein uS19.

The protein resides in the cytoplasm. An accessory protein needed during the final step in the assembly of 30S ribosomal subunit, possibly for assembly of the head region. Essential for efficient processing of 16S rRNA. May be needed both before and after RbfA during the maturation of 16S rRNA. It has affinity for free ribosomal 30S subunits but not for 70S ribosomes. The polypeptide is Ribosome maturation factor RimM (Burkholderia lata (strain ATCC 17760 / DSM 23089 / LMG 22485 / NCIMB 9086 / R18194 / 383)).